The chain runs to 200 residues: GTP cyclohydrolase-2 (200 aa).

50–54 (RVHSE) lines the GTP pocket. Zn(2+)-binding residues include C55, C66, and C68. Residues Q71, 93 to 95 (EGR), and T115 each bind GTP. D127 serves as the catalytic Proton acceptor. R129 (nucleophile) is an active-site residue. T150 and K155 together coordinate GTP.

Belongs to the GTP cyclohydrolase II family. It depends on Zn(2+) as a cofactor.

It catalyses the reaction GTP + 4 H2O = 2,5-diamino-6-hydroxy-4-(5-phosphoribosylamino)-pyrimidine + formate + 2 phosphate + 3 H(+). Its pathway is cofactor biosynthesis; riboflavin biosynthesis; 5-amino-6-(D-ribitylamino)uracil from GTP: step 1/4. Functionally, catalyzes the conversion of GTP to 2,5-diamino-6-ribosylamino-4(3H)-pyrimidinone 5'-phosphate (DARP), formate and pyrophosphate. The protein is GTP cyclohydrolase-2 of Acinetobacter baumannii (strain SDF).